Consider the following 192-residue polypeptide: NOP protein chaperone 1 (192 aa).

Residues 1 to 26 (MEVSGESHSGPSCSSSSRDGSGVSVS) are compositionally biased toward low complexity. The segment at 1–39 (MEVSGESHSGPSCSSSSRDGSGVSVSKELLMAGSGGRGG) is disordered. 2 positions are modified to phosphoserine: S34 and S66. The interval 118–192 (FEMNQSHSKE…SENKEKQENK (75 aa)) is disordered. Positions 129–152 (DSSEENSQDSSEESSESEDEDDST) are enriched in acidic residues. Positions 164 to 177 (KLPHSEDGKGKIEV) are enriched in basic and acidic residues. S180 is modified (phosphoserine).

As to quaternary structure, interacts with NOP58, RUVBL1 and RUVBL2; the interactions are direct and NOPCHAP1 bridges the association of NOP58 with RUVBL1:RUVBL2 even in absence of snoRNAs. The interactions with RUVBL1 and RUVBL2 are disrupted upon ATP binding.

It localises to the nucleus. Functionally, client-loading PAQosome/R2TP complex cofactor that selects NOP58 to promote box C/D small nucleolar ribonucleoprotein (snoRNP) assembly. Acts as a bridge between NOP58 and the R2TP complex via RUVBL1:RUVBL2. This is NOP protein chaperone 1 (NOPCHAP1) from Bos taurus (Bovine).